Reading from the N-terminus, the 513-residue chain is MDNAKIVIKSIKDYIVEVQGDYDFRLYEVFQLTDDVKGFCLSVDEKRTFLLIDGDTSKIKVGTEIIPLESRFIAKTYKDYFGKIIDIDGKVLYSESEDQEISEKAYENENSAFKVASGIQDRVKLNEPLETGIFSIDILLPIGKGQRQLILGDSKTGKTSIALSTMINQKENDIKIIYVSIGLKSNDLKRIYKTIVEQKIAHKTILMHASSDNSFQQFLIPYVAMAHAENIMQSGEDVLIIFDDLTNHANVLREIALLTGKPVGKEAFPGDLFYSHSKLLERAGKFKNGYSITCFPIVRTINNDMTSLLASNIASITDGQIVTNSEIKDQGILPAIDIGLSVSRTGSSVQSVSLSKIAIEISKIYSKYKQNEKFSDTNFDLNDSVRDIIKKGKILLKILNQKEFQAYSRSFNLIIAYIVVWGIFEDEEKIYDKLIYLYFVLRYDYIGKILVNVVDKKSGVDGMVDEGVLKAEIMRLLAHFKDIHNIKTKSYNDGKFNLSTRVLHKVKDRIWEK.

152–159 contributes to the ATP binding site; sequence GDSKTGKT.

It belongs to the ATPase alpha/beta chains family. F-type ATPases have 2 components, CF(1) - the catalytic core - and CF(0) - the membrane proton channel. CF(1) has five subunits: alpha(3), beta(3), gamma(1), delta(1), epsilon(1). CF(0) has three main subunits: a(1), b(2) and c(9-12). The alpha and beta chains form an alternating ring which encloses part of the gamma chain. CF(1) is attached to CF(0) by a central stalk formed by the gamma and epsilon chains, while a peripheral stalk is formed by the delta and b chains.

The protein resides in the cell membrane. It carries out the reaction ATP + H2O + 4 H(+)(in) = ADP + phosphate + 5 H(+)(out). Functionally, produces ATP from ADP in the presence of a proton gradient across the membrane. The alpha chain is a regulatory subunit. This Mycoplasmopsis pulmonis (strain UAB CTIP) (Mycoplasma pulmonis) protein is ATP synthase subunit alpha 2.